The following is a 149-amino-acid chain: Cyanate hydratase (149 aa).

Residues Arg90, Glu93, and Ser116 contribute to the active site.

Belongs to the cyanase family.

The catalysed reaction is cyanate + hydrogencarbonate + 3 H(+) = NH4(+) + 2 CO2. Its function is as follows. Catalyzes the reaction of cyanate with bicarbonate to produce ammonia and carbon dioxide. This Aquifex aeolicus (strain VF5) protein is Cyanate hydratase.